We begin with the raw amino-acid sequence, 187 residues long: Peptidyl-tRNA hydrolase (187 aa).

Y14 provides a ligand contact to tRNA. H19 serves as the catalytic Proton acceptor. Residues Y64, N66, and N112 each contribute to the tRNA site.

It belongs to the PTH family. As to quaternary structure, monomer.

Its subcellular location is the cytoplasm. The catalysed reaction is an N-acyl-L-alpha-aminoacyl-tRNA + H2O = an N-acyl-L-amino acid + a tRNA + H(+). Hydrolyzes ribosome-free peptidyl-tRNAs (with 1 or more amino acids incorporated), which drop off the ribosome during protein synthesis, or as a result of ribosome stalling. Functionally, catalyzes the release of premature peptidyl moieties from peptidyl-tRNA molecules trapped in stalled 50S ribosomal subunits, and thus maintains levels of free tRNAs and 50S ribosomes. This chain is Peptidyl-tRNA hydrolase, found in Bdellovibrio bacteriovorus (strain ATCC 15356 / DSM 50701 / NCIMB 9529 / HD100).